The following is a 273-amino-acid chain: Putative pyruvate, phosphate dikinase regulatory protein (273 aa).

Glycine 151–threonine 158 serves as a coordination point for ADP.

Belongs to the pyruvate, phosphate/water dikinase regulatory protein family. PDRP subfamily.

It carries out the reaction N(tele)-phospho-L-histidyl/L-threonyl-[pyruvate, phosphate dikinase] + ADP = N(tele)-phospho-L-histidyl/O-phospho-L-threonyl-[pyruvate, phosphate dikinase] + AMP + H(+). The enzyme catalyses N(tele)-phospho-L-histidyl/O-phospho-L-threonyl-[pyruvate, phosphate dikinase] + phosphate + H(+) = N(tele)-phospho-L-histidyl/L-threonyl-[pyruvate, phosphate dikinase] + diphosphate. Functionally, bifunctional serine/threonine kinase and phosphorylase involved in the regulation of the pyruvate, phosphate dikinase (PPDK) by catalyzing its phosphorylation/dephosphorylation. The polypeptide is Putative pyruvate, phosphate dikinase regulatory protein (Desulfitobacterium hafniense (strain DSM 10664 / DCB-2)).